The sequence spans 493 residues: Probable plastidic glucose transporter 2 (493 aa).

The segment covering 1–14 (MLGLQRETSSMYKR) has biased composition (polar residues). The segment at 1–24 (MLGLQRETSSMYKRTSSRDYSPMI) is disordered. The next 12 membrane-spanning stretches (helical) occupy residues 52-72 (LPHV…LGVV), 94-114 (LVVS…GGVA), 128-148 (LPMI…VMLL), 151-171 (FLVG…VTEV), 182-202 (SFIQ…GIPV), 211-231 (VCFW…FLCA), 293-313 (VVFI…NAVF), 329-349 (LGNI…MVLM), 356-376 (LLLL…VGAT), 392-412 (GTLV…GLLL), 424-444 (AMAF…LLFL), and 450-470 (LGPR…VMFV).

Belongs to the major facilitator superfamily. Sugar transporter (TC 2.A.1.1) family.

It localises to the plastid. It is found in the chloroplast membrane. Functionally, may be involved in the efflux of glucose towards the cytosol. This is Probable plastidic glucose transporter 2 from Arabidopsis thaliana (Mouse-ear cress).